A 458-amino-acid chain; its full sequence is ATP synthase subunit beta (458 aa).

Residue Gly-148–Thr-155 participates in ATP binding.

This sequence belongs to the ATPase alpha/beta chains family. F-type ATPases have 2 components, CF(1) - the catalytic core - and CF(0) - the membrane proton channel. CF(1) has five subunits: alpha(3), beta(3), gamma(1), delta(1), epsilon(1). CF(0) has three main subunits: a(1), b(2) and c(9-12). The alpha and beta chains form an alternating ring which encloses part of the gamma chain. CF(1) is attached to CF(0) by a central stalk formed by the gamma and epsilon chains, while a peripheral stalk is formed by the delta and b chains.

Its subcellular location is the cell inner membrane. The enzyme catalyses ATP + H2O + 4 H(+)(in) = ADP + phosphate + 5 H(+)(out). In terms of biological role, produces ATP from ADP in the presence of a proton gradient across the membrane. The catalytic sites are hosted primarily by the beta subunits. The chain is ATP synthase subunit beta from Pseudomonas aeruginosa (strain LESB58).